We begin with the raw amino-acid sequence, 271 residues long: Beta-lysine N(6)-acetyltransferase (271 aa).

The interval 86-122 is disordered; that stretch reads LRKDRGTGKNQKKKKISRKKDNWKKRKEKSRLPEGYT. Residues 95-114 are compositionally biased toward basic residues; sequence NQKKKKISRKKDNWKKRKEK. Positions 121–269 constitute an N-acetyltransferase domain; the sequence is YTLRPAVQAD…GFEDMNIWCR (149 aa).

Belongs to the acetyltransferase family.

It catalyses the reaction (3S)-3,6-diaminohexanoate + acetyl-CoA = (3S)-6-acetamido-3-aminohexanoate + CoA + H(+). Catalyzes the acetylation of beta-lysine to N6-acetyl-beta-lysine, a compatible solute produced by methanogenic archaea that helps cells to cope with salt stress. The sequence is that of Beta-lysine N(6)-acetyltransferase from Methanosarcina mazei (strain ATCC BAA-159 / DSM 3647 / Goe1 / Go1 / JCM 11833 / OCM 88) (Methanosarcina frisia).